The sequence spans 241 residues: ATP phosphoribosyltransferase (241 aa).

The protein belongs to the ATP phosphoribosyltransferase family. Short subfamily. Heteromultimer composed of HisG and HisZ subunits.

It localises to the cytoplasm. The enzyme catalyses 1-(5-phospho-beta-D-ribosyl)-ATP + diphosphate = 5-phospho-alpha-D-ribose 1-diphosphate + ATP. Its pathway is amino-acid biosynthesis; L-histidine biosynthesis; L-histidine from 5-phospho-alpha-D-ribose 1-diphosphate: step 1/9. In terms of biological role, catalyzes the condensation of ATP and 5-phosphoribose 1-diphosphate to form N'-(5'-phosphoribosyl)-ATP (PR-ATP). Has a crucial role in the pathway because the rate of histidine biosynthesis seems to be controlled primarily by regulation of HisG enzymatic activity. The sequence is that of ATP phosphoribosyltransferase from Gluconobacter oxydans (strain 621H) (Gluconobacter suboxydans).